Reading from the N-terminus, the 95-residue chain is Co-chaperonin GroES (95 aa).

It belongs to the GroES chaperonin family. In terms of assembly, heptamer of 7 subunits arranged in a ring. Interacts with the chaperonin GroEL.

It is found in the cytoplasm. Functionally, together with the chaperonin GroEL, plays an essential role in assisting protein folding. The GroEL-GroES system forms a nano-cage that allows encapsulation of the non-native substrate proteins and provides a physical environment optimized to promote and accelerate protein folding. GroES binds to the apical surface of the GroEL ring, thereby capping the opening of the GroEL channel. This is Co-chaperonin GroES from Caldicellulosiruptor bescii (strain ATCC BAA-1888 / DSM 6725 / KCTC 15123 / Z-1320) (Anaerocellum thermophilum).